The primary structure comprises 248 residues: Serine/arginine-rich splicing factor 1 (248 aa).

At S2 the chain carries N-acetylserine. S2 bears the Phosphoserine mark. One can recognise an RRM 1 domain in the interval 16 to 91 (CRIYVGNLPP…YRLRVEFPRS (76 aa)). K30 is covalently cross-linked (Glycyl lysine isopeptide (Lys-Gly) (interchain with G-Cter in SUMO2)). Residue K38 is modified to N6-acetyllysine; alternate. Residue K38 forms a Glycyl lysine isopeptide (Lys-Gly) (interchain with G-Cter in SUMO2); alternate linkage. The segment at 88-134 (FPRSGRGTGRGGGGGGGGGAPRGRYGPPSRRSENRVVVSGLPPSGSW) is disordered. Residues R93, R97, and R109 each carry the asymmetric dimethylarginine; alternate modification. 3 positions are modified to omega-N-methylarginine; alternate: R93, R97, and R109. The span at 93 to 108 (RGTGRGGGGGGGGGAP) shows a compositional bias: gly residues. R111 carries the post-translational modification Omega-N-methylarginine. The RRM 2 domain maps to 121 to 195 (NRVVVSGLPP…ETAYIRVKVD (75 aa)). S133 carries the post-translational modification Phosphoserine. An N6-acetyllysine modification is found at K179. The disordered stretch occupies residues 191–248 (RVKVDGPRSPSYGRSRSRSRSRSRSRSRSNSRSRSYSPRRSRGSPRYSPRHSRSRSRT). The segment at 198–247 (RSPSYGRSRSRSRSRSRSRSRSNSRSRSYSPRRSRGSPRYSPRHSRSRSR) is interaction with SAFB1. 2 positions are modified to phosphoserine: S199 and S201. Y202 is modified (phosphotyrosine). Phosphoserine is present on residues S205, S207, S209, S231, S234, and S238. Over residues 205-248 (SRSRSRSRSRSRSRSNSRSRSYSPRRSRGSPRYSPRHSRSRSRT) the composition is skewed to basic residues.

It belongs to the splicing factor SR family. As to quaternary structure, consists of two polypeptides of p32 and p33. Identified in the spliceosome C complex. Component of a ribonucleoprotein complex containing mRNAs and RNA-binding proteins including DDX5, HNRNPH2 and SRSF1 as well as splicing regulator ARVCF. In vitro, self-associates and binds SRSF2, SNRNP70 and U2AF1 but not U2AF2. Binds SREK1/SFRS12. Interacts with SAFB/SAFB1. Interacts with PSIP1/LEDGF. Interacts with RSRC1 (via Arg/Ser-rich domain). Interacts with ZRSR2/U2AF1-RS2. Interacts with CCDC55 (via C-terminus). Interacts with SRPK1 and a sliding docking interaction is essential for its sequential and processive phosphorylation by SRPK1. Interacts with NXF1. Interacts with CCNL1, CCNL2 and CDK11B. Interacts with RRP1B. Interacts (when phosphorylated in its RS domain) with TNPO3; promoting nuclear import. Interacts with ILDR1 (via C-terminus) and ILDR2. In terms of processing, phosphorylated by CLK1, CLK2, CLK3 and CLK4. Phosphorylated by SRPK1 at multiple serines in its RS domain via a directional (C-terminal to N-terminal) and a dual-track mechanism incorporating both processive phosphorylation (in which the kinase stays attached to the substrate after each round of phosphorylation) and distributive phosphorylation steps (in which the kinase and substrate dissociate after each phosphorylation event). The RS domain of SRSF1 binds to a docking groove in the large lobe of the kinase domain of SRPK1 and this induces certain structural changes in SRPK1 and/or RRM 2 domain of SRSF1, allowing RRM 2 to bind the kinase and initiate phosphorylation. The cycles continue for several phosphorylation steps in a processive manner (steps 1-8) until the last few phosphorylation steps (approximately steps 9-12). During that time, a mechanical stress induces the unfolding of the beta-4 motif in RRM 2, which then docks at the docking groove of SRPK1. This also signals RRM 2 to begin to dissociate, which facilitates SRSF1 dissociation after phosphorylation is completed. Post-translationally, asymmetrically dimethylated at arginines, probably by PRMT1, methylation promotes localization to nuclear speckles.

It is found in the cytoplasm. The protein localises to the nucleus speckle. Its function is as follows. Plays a role in preventing exon skipping, ensuring the accuracy of splicing and regulating alternative splicing. Interacts with other spliceosomal components, via the RS domains, to form a bridge between the 5'- and 3'-splice site binding components, U1 snRNP and U2AF. Can stimulate binding of U1 snRNP to a 5'-splice site-containing pre-mRNA. Binds to purine-rich RNA sequences, either the octamer, 5'-RGAAGAAC-3' (r=A or G) or the decamers, AGGACAGAGC/AGGACGAAGC. Binds preferentially to the 5'-CGAGGCG-3' motif in vitro. Three copies of the octamer constitute a powerful splicing enhancer in vitro, the ASF/SF2 splicing enhancer (ASE) which can specifically activate ASE-dependent splicing. May function as export adapter involved in mRNA nuclear export through the TAP/NXF1 pathway. In Bos taurus (Bovine), this protein is Serine/arginine-rich splicing factor 1 (SRSF1).